We begin with the raw amino-acid sequence, 1349 residues long: Protein turtle homolog B (1349 aa).

The first 20 residues, 1 to 20 (MIWYVATFIASVIGTRGLAA), serve as a signal peptide directing secretion. Residues 21 to 722 (EGAHGLREEP…DLTEDGLARP (702 aa)) lie on the Extracellular side of the membrane. Ig-like domains are found at residues 24–129 (HGLR…HNGS), 139–226 (PTFT…LLVQ), 228–320 (PPFI…AYLT), 324–415 (PARV…ARLV), and 420–504 (PYFT…THLT). 2 disulfides stabilise this stretch: Cys-45-Cys-113 and Cys-161-Cys-208. Asn-241 and Asn-258 each carry an N-linked (GlcNAc...) asparagine glycan. 3 disulfides stabilise this stretch: Cys-250/Cys-303, Cys-346/Cys-397, and Cys-442/Cys-488. 2 Fibronectin type-III domains span residues 512 to 604 (APGS…TLAF) and 614 to 708 (LVTP…STDI). Asn-624 carries N-linked (GlcNAc...) asparagine glycosylation. The chain crosses the membrane as a helical span at residues 723 to 743 (VLAGIVATICFLAAAILFSTL). The Cytoplasmic portion of the chain corresponds to 744-1349 (AACFVNKQRK…SPPERALSKL (606 aa)). Disordered stretches follow at residues 758–817 (RKKD…EKEL), 911–1081 (QLTP…RGLP), and 1099–1349 (APKG…LSKL). Phosphoserine is present on residues Ser-775, Ser-783, and Ser-794. A compositionally biased stretch (polar residues) spans 911-921 (QLTPLSSSQES). A compositionally biased stretch (low complexity) spans 985–998 (VPEVGSPLSSVMSS). 3 stretches are compositionally biased toward polar residues: residues 1018 to 1033 (ENASNSTLPLTQTPTG), 1129 to 1141 (LVSQGQLRHTSQG), and 1199 to 1214 (SRLSPLTQSPLSSRTG). Residue Arg-1136 is modified to Omega-N-methylarginine. Phosphoserine occurs at positions 1207 and 1215. Residues 1251–1271 (STPSTGSPSQSSRSGSPSYRP) show a composition bias toward low complexity. A compositionally biased stretch (pro residues) spans 1283–1292 (PSPPPGPAPA).

The protein belongs to the immunoglobulin superfamily. Turtle family. As to quaternary structure, found in a complex with MAGI2 and NLGN2, where it interacts with MAGI2 (via PDZ 5 and PDZ 6 domains). N-glycosylated and sialylated. Not significantly O-glycosylated.

It localises to the postsynaptic cell membrane. Its subcellular location is the postsynaptic density. Functionally, transmembrane protein which is abundantly expressed in interneurons, where it may regulate inhibitory synapse development. May mediate homophilic cell adhesion. In Homo sapiens (Human), this protein is Protein turtle homolog B (IGSF9B).